Reading from the N-terminus, the 557-residue chain is Hepatocyte nuclear factor 1-beta (557 aa).

Residues 1–31 form a dimerization region; that stretch reads MVSKLTSLQQELLSALLSSGVTKEVLIQALE. Residues 1 to 32 enclose the HNF-p1 domain; sequence MVSKLTSLQQELLSALLSSGVTKEVLIQALEE. Residues serine 49, serine 52, serine 75, and serine 80 each carry the phosphoserine modification. The disordered stretch occupies residues 66–85; it reads TNGHAKGRLSGDEGSEDGDD. The POU-specific atypical domain maps to 93–188; the sequence is KELQALNTEE…ILRQFNQTVQ (96 aa). Residues 231–311 constitute a DNA-binding region (homeobox; HNF1-type); it reads MRRNRFKWGP…NRRKEEAFRQ (81 aa). The interval 324 to 370 is disordered; sequence HNLNPLLTHGSPHHQPSSSPPNKLSGVRYSQPGNNEVTSSSTISHHG. Residues 354 to 370 show a composition bias toward polar residues; that stretch reads QPGNNEVTSSSTISHHG.

This sequence belongs to the HNF1 homeobox family. Binds DNA as a dimer. Can form homodimer or heterodimer with HNF1-alpha. Interacts (via HNF-p1 domain) with PCBD1; the interaction increases its transactivation activity. Liver, kidney and intestine.

Its subcellular location is the nucleus. Its function is as follows. Transcription factor that binds to the inverted palindrome 5'-GTTAATNATTAAC-3'. Binds to the FPC element in the cAMP regulatory unit of the PLAU gene. Transcriptional activity is increased by coactivator PCBD1. The polypeptide is Hepatocyte nuclear factor 1-beta (Hnf1b) (Rattus norvegicus (Rat)).